An 804-amino-acid polypeptide reads, in one-letter code: Leucine--tRNA ligase (804 aa).

The 'HIGH' region motif lies at 40 to 51; that stretch reads PYPSGAGLHVGH. A 'KMSKS' region motif is present at residues 574-578; sequence KMSKS. Residue lysine 577 participates in ATP binding.

It belongs to the class-I aminoacyl-tRNA synthetase family.

The protein resides in the cytoplasm. The catalysed reaction is tRNA(Leu) + L-leucine + ATP = L-leucyl-tRNA(Leu) + AMP + diphosphate. The chain is Leucine--tRNA ligase from Shouchella clausii (strain KSM-K16) (Alkalihalobacillus clausii).